A 420-amino-acid chain; its full sequence is Acetyl-CoA acetyltransferase, mitochondrial (420 aa).

The N-terminal 26 residues, 1–26 (MTSRALYSTRSQLCRHLAHKYLSRSY), are a transit peptide targeting the mitochondrion. Cys119 serves as the catalytic Acyl-thioester intermediate. CoA contacts are provided by residues Tyr212, 251–253 (KVD), and Lys256. Residue Tyr212 participates in K(+) binding. K(+)-binding residues include Ala273, Ala274, and Ala276. Ser277 provides a ligand contact to CoA. Residue Val374 coordinates K(+). The active-site Proton donor/acceptor is the Cys406.

The protein belongs to the thiolase-like superfamily. Thiolase family. As to quaternary structure, homotetramer.

It is found in the mitochondrion. It carries out the reaction 2 acetyl-CoA = acetoacetyl-CoA + CoA. The catalysed reaction is propanoyl-CoA + acetyl-CoA = 2-methyl-3-oxobutanoyl-CoA + CoA. The protein operates within lipid metabolism; fatty acid beta-oxidation. In terms of biological role, this is one of the enzymes that catalyzes the last step of the mitochondrial beta-oxidation pathway, an aerobic process breaking down fatty acids into acetyl-CoA. Using free coenzyme A/CoA, catalyzes the thiolytic cleavage of medium- to long-chain 3-oxoacyl-CoAs into acetyl-CoA and a fatty acyl-CoA shortened by two carbon atoms. The activity of the enzyme is reversible and it can also catalyze the condensation of two acetyl-CoA molecules into acetoacetyl-CoA. Thereby, it plays a major role in ketone body metabolism. The protein is Acetyl-CoA acetyltransferase, mitochondrial (acat1) of Danio rerio (Zebrafish).